Here is a 316-residue protein sequence, read N- to C-terminus: Ornithine carbamoyltransferase (316 aa).

Residues 57 to 60, Gln-84, Arg-108, and 135 to 138 contribute to the carbamoyl phosphate site; these read STRT and HPCQ. L-ornithine contacts are provided by residues Asn-166, Asp-230, and 234-235; that span reads SM. Residues 269–270 and Arg-297 each bind carbamoyl phosphate; that span reads CL.

It belongs to the aspartate/ornithine carbamoyltransferase superfamily. OTCase family.

The protein resides in the cytoplasm. It carries out the reaction carbamoyl phosphate + L-ornithine = L-citrulline + phosphate + H(+). Its pathway is amino-acid biosynthesis; L-arginine biosynthesis; L-arginine from L-ornithine and carbamoyl phosphate: step 1/3. In terms of biological role, reversibly catalyzes the transfer of the carbamoyl group from carbamoyl phosphate (CP) to the N(epsilon) atom of ornithine (ORN) to produce L-citrulline. In Bacillus cereus (strain ZK / E33L), this protein is Ornithine carbamoyltransferase.